Consider the following 415-residue polypeptide: Homoserine O-acetyltransferase (415 aa).

The 323-residue stretch at N47–P369 folds into the AB hydrolase-1 domain. The Nucleophile role is filled by S155. R226 serves as a coordination point for substrate. Residues D329 and H362 contribute to the active site. D363 serves as a coordination point for substrate. The interval R387–R415 is disordered.

It belongs to the AB hydrolase superfamily. MetX family. As to quaternary structure, homodimer.

It localises to the cytoplasm. It catalyses the reaction L-homoserine + acetyl-CoA = O-acetyl-L-homoserine + CoA. It functions in the pathway amino-acid biosynthesis; L-methionine biosynthesis via de novo pathway; O-acetyl-L-homoserine from L-homoserine: step 1/1. Transfers an acetyl group from acetyl-CoA to L-homoserine, forming acetyl-L-homoserine. The sequence is that of Homoserine O-acetyltransferase from Haloferax gibbonsii (strain ATCC 33959 / DSM 4427 / JCM 8863 / NBRC 102184 / NCIMB 2188 / Ma 2.38).